Reading from the N-terminus, the 495-residue chain is Cytochrome P450 2B15 (495 aa).

S129 carries the phosphoserine; by PKA modification. C437 serves as a coordination point for heme.

This sequence belongs to the cytochrome P450 family. Requires heme as cofactor.

Its subcellular location is the endoplasmic reticulum membrane. The protein resides in the microsome membrane. It carries out the reaction an organic molecule + reduced [NADPH--hemoprotein reductase] + O2 = an alcohol + oxidized [NADPH--hemoprotein reductase] + H2O + H(+). In terms of biological role, cytochromes P450 are a group of heme-thiolate monooxygenases. In liver microsomes, this enzyme is involved in an NADPH-dependent electron transport pathway. It oxidizes a variety of structurally unrelated compounds, including steroids, fatty acids, and xenobiotics. This Rattus norvegicus (Rat) protein is Cytochrome P450 2B15 (Cyp2b15).